A 95-amino-acid polypeptide reads, in one-letter code: MNEVVNSGVMNIASLVVSVVVLLIGLILWFFINRASSRTNEQIELLEALLDQQKRQNALLRRLCEANEPEKADKKTVESQKSVEDEDIIRLVAER.

A helical transmembrane segment spans residues Ile-12–Ile-32.

The protein localises to the cell membrane. This is an uncharacterized protein from Escherichia coli O6:H1 (strain CFT073 / ATCC 700928 / UPEC).